Reading from the N-terminus, the 503-residue chain is Cobyric acid synthase (503 aa).

The GATase cobBQ-type domain occupies 251-450 (DLDIAVIRLP…IHGIFENAAF (200 aa)). Cys331 (nucleophile) is an active-site residue. His442 is a catalytic residue.

Belongs to the CobB/CobQ family. CobQ subfamily.

It functions in the pathway cofactor biosynthesis; adenosylcobalamin biosynthesis. In terms of biological role, catalyzes amidations at positions B, D, E, and G on adenosylcobyrinic A,C-diamide. NH(2) groups are provided by glutamine, and one molecule of ATP is hydrogenolyzed for each amidation. In Dehalococcoides mccartyi (strain CBDB1), this protein is Cobyric acid synthase.